The following is a 704-amino-acid chain: Low calcium response locus protein D (704 aa).

7 consecutive transmembrane segments (helical) span residues 18–35 (IMLA…VLPL), 42–61 (ILIA…AIYI), 108–132 (FVVG…FLVI), 200–220 (AIAG…IGVT), 235–259 (ILTV…GIIV), 278–297 (VVAQ…LFGL), and 304–320 (VTFL…GYML).

It belongs to the FHIPEP (flagella/HR/invasion proteins export pore) family.

The protein resides in the cell inner membrane. Its function is as follows. Could be involved in the secretion of the yop virulence proteins. This chain is Low calcium response locus protein D (lcrD), found in Yersinia pestis.